The chain runs to 299 residues: tRNA dimethylallyltransferase 2 (299 aa).

Position 9-16 (9-16 (GPTGVGKT)) interacts with ATP. 11-16 (TGVGKT) lines the substrate pocket. The tract at residues 34-37 (DSRQ) is interaction with substrate tRNA.

The protein belongs to the IPP transferase family. In terms of assembly, monomer. Mg(2+) serves as cofactor.

It carries out the reaction adenosine(37) in tRNA + dimethylallyl diphosphate = N(6)-dimethylallyladenosine(37) in tRNA + diphosphate. Catalyzes the transfer of a dimethylallyl group onto the adenine at position 37 in tRNAs that read codons beginning with uridine, leading to the formation of N6-(dimethylallyl)adenosine (i(6)A). The polypeptide is tRNA dimethylallyltransferase 2 (Parabacteroides distasonis (strain ATCC 8503 / DSM 20701 / CIP 104284 / JCM 5825 / NCTC 11152)).